A 79-amino-acid polypeptide reads, in one-letter code: Cell division protein ZapB (79 aa).

Residues 6–78 (FEKLEVKVQQ…LRALLGKMEE (73 aa)) are a coiled coil.

This sequence belongs to the ZapB family. Homodimer. The ends of the coiled-coil dimer bind to each other, forming polymers. Interacts with FtsZ.

The protein resides in the cytoplasm. In terms of biological role, non-essential, abundant cell division factor that is required for proper Z-ring formation. It is recruited early to the divisome by direct interaction with FtsZ, stimulating Z-ring assembly and thereby promoting cell division earlier in the cell cycle. Its recruitment to the Z-ring requires functional FtsA or ZipA. This Yersinia pseudotuberculosis serotype O:1b (strain IP 31758) protein is Cell division protein ZapB.